The chain runs to 281 residues: Pantothenate synthetase (281 aa).

30–37 serves as a coordination point for ATP; sequence MGALHAGH. Catalysis depends on H37, which acts as the Proton donor. Q64 lines the (R)-pantoate pocket. Q64 contacts beta-alanine. Position 150–153 (150–153) interacts with ATP; sequence GKKD. Position 156 (Q156) interacts with (R)-pantoate. ATP-binding positions include V179 and 187 to 190; that span reads YSSR.

It belongs to the pantothenate synthetase family. In terms of assembly, homodimer.

It is found in the cytoplasm. It catalyses the reaction (R)-pantoate + beta-alanine + ATP = (R)-pantothenate + AMP + diphosphate + H(+). It functions in the pathway cofactor biosynthesis; (R)-pantothenate biosynthesis; (R)-pantothenate from (R)-pantoate and beta-alanine: step 1/1. Functionally, catalyzes the condensation of pantoate with beta-alanine in an ATP-dependent reaction via a pantoyl-adenylate intermediate. This is Pantothenate synthetase from Akkermansia muciniphila (strain ATCC BAA-835 / DSM 22959 / JCM 33894 / BCRC 81048 / CCUG 64013 / CIP 107961 / Muc).